A 437-amino-acid chain; its full sequence is tRNA(Ile)-lysidine synthase (437 aa).

An ATP-binding site is contributed by 22–27 (SGGLDS).

Belongs to the tRNA(Ile)-lysidine synthase family.

The protein resides in the cytoplasm. It catalyses the reaction cytidine(34) in tRNA(Ile2) + L-lysine + ATP = lysidine(34) in tRNA(Ile2) + AMP + diphosphate + H(+). In terms of biological role, ligates lysine onto the cytidine present at position 34 of the AUA codon-specific tRNA(Ile) that contains the anticodon CAU, in an ATP-dependent manner. Cytidine is converted to lysidine, thus changing the amino acid specificity of the tRNA from methionine to isoleucine. This chain is tRNA(Ile)-lysidine synthase, found in Xylella fastidiosa (strain 9a5c).